The sequence spans 510 residues: NAD(P)H-quinone oxidoreductase subunit 2, chloroplastic (510 aa).

The next 13 membrane-spanning stretches (helical) occupy residues 24–44 (LLLF…GLIL), 59–79 (WFYF…LFRW), 99–119 (IFQF…VEYI), 124–144 (MAIT…MFLC), 149–169 (LITI…LSGY), 183–203 (YLLM…WLYG), 229–249 (ISIA…PAPF), 295–315 (WHLL…LIAI), 323–343 (MLAY…IVGD), 354–374 (YMLF…SFGL), 395–415 (ALSL…AGFF), 418–438 (LYLF…MGLL), and 484–504 (MTVC…ILAI).

The protein belongs to the complex I subunit 2 family. NDH is composed of at least 16 different subunits, 5 of which are encoded in the nucleus.

It is found in the plastid. It localises to the chloroplast thylakoid membrane. The enzyme catalyses a plastoquinone + NADH + (n+1) H(+)(in) = a plastoquinol + NAD(+) + n H(+)(out). The catalysed reaction is a plastoquinone + NADPH + (n+1) H(+)(in) = a plastoquinol + NADP(+) + n H(+)(out). NDH shuttles electrons from NAD(P)H:plastoquinone, via FMN and iron-sulfur (Fe-S) centers, to quinones in the photosynthetic chain and possibly in a chloroplast respiratory chain. The immediate electron acceptor for the enzyme in this species is believed to be plastoquinone. Couples the redox reaction to proton translocation, and thus conserves the redox energy in a proton gradient. In Sisyrinchium montanum (Strict blue-eyed grass), this protein is NAD(P)H-quinone oxidoreductase subunit 2, chloroplastic.